Here is a 334-residue protein sequence, read N- to C-terminus: Inositol 2-dehydrogenase (334 aa).

It belongs to the Gfo/Idh/MocA family. As to quaternary structure, homotetramer.

It carries out the reaction myo-inositol + NAD(+) = scyllo-inosose + NADH + H(+). Its function is as follows. Involved in the oxidation of myo-inositol (MI) to 2-keto-myo-inositol (2KMI or 2-inosose). This Cereibacter sphaeroides (strain ATCC 17029 / ATH 2.4.9) (Rhodobacter sphaeroides) protein is Inositol 2-dehydrogenase.